The following is a 2467-amino-acid chain: MKVTVDVEADSPFLKALQKAFPAFEVESQQVTPNDHANARAFSHLATKLIEQEVPTGVTILDVGSAPARRLMSDHTYHCICPMKSAEDPERLANYARKLAKASGTVLDKNVSGKITDLQDVMATPDLESPTFCLHTDETCRTRAEVAVYQDVYAVHAPTSLYHQAIKGVRTAYWIGFDTTPFMFEALAGAYPAYSTNWADEQVLQARNIGLCATGLSEGRRGKLSIMRKKCLRPSDRVMFSVGSTLYTESRKLLRSWHLPSVFHLKGKNSFTCRCDTVVSCEGYVVKKITISPGIYGKTVDYAVTHHAEGFLMCKITDTVRGERVSFPVCTYVPATICDQMTGILATDVTPEDAQKLLVGLNQRIVVNGRTQRNTNTMKNYLLPVVAQAFSKWAREARADMEDEKPLGTRERTLTCCCLWAFKSHKIHTMYKRPETQTIVKVPSTFDSFVIPSLWSSSLSMGIRQRIKLLLSARMAQGLPYSGDRTEARAAEEEEKEVQEAELTRAALPPLVSGSCADDIAQVDVEELTFRAGAGVVETPRNALKVTPQAHDHLIGSYLILSPQTVLKSEKLAPIHPLAEQVTVMTHSGRSGRYPVDKYDGRVLIPTGAAIPVSEFQALSESATMVYNEREFINRKLHHIALYGPALNTDEESYEKVRAERAETEYVFDVDKKACIKKEEASGLVLTGDLINPPFHEFAYEGLKIRPAAPYHTTIIGVFGVPGSGKSAIIKNMVTTRDLVASGKKENCQEIMNDVKRQRGLDVTARTVDSILLNGCKKGVENLYVDEAFACHSGTLLALIALVRPSGKVVLCGDPKQCGFFNLMQLKVHYNHNICTRVLHKSISRRCTLPVTAIVSTLHYQGKMRTTNRCNTPIQIDTTGSSKPASGDIVLTCFRGWVKQLQIDYRGHEVMTAAASQGLTRKGVYAVRQKVNENPLYSPLSEHVNVLLTRTENRLVWKTLSGDPWIKVLTNVPRGDFSATLEEWHEEHDGIMRVLNERPAEVDPFQNKAKVCWAKCLVQVLETAGIRMTADEWNTILAFREDRAYSPEVALNEICTRYYGVDLDSGLFSAQSVSLFYENNHWDNRPGGRMYGFNHEVARKYAARFPFLRGNMNSGLQLNVPERKLQPFSAECNIVPSNRRLPHALVTSYQQCRGERVEWLLKKIPGHQMLLVSEYNLVIPHKRVFWIAPPRVSGADRTYDLDLGLPMDAGRYDLVFVNIHTEYRQHHYQQCVDHSMRLQMLGGDSLHLLRPGGSLLMRAYGYADRVSEMVVTALARKFSAFRVLRPACVTSNTEVFLLFSNFDNGRRAVTLHQANQKLSSMYACNGLHTAGCAPSYRVRRADISGHSEEAVVNAANAKGTVSDGVCRAVAKKWPSSFKGAATPVGTAKMIRADGMTVIHAVGPNFSTVTEAEGDRELAAAYRAVASIISTNNIKSVAVPLLSTGTFSGGKDRVMQSLNHLFTALDATDADVVIYCRDKNWEKKIQEAIDRRTAIELVSEDVTLETDLVRVHPDSCLVGRNGYSATDGKLYSYLEGTRFHQTAVDMAEISTLWPRLQDANEQICLYALGETMDSIRTKCPVEDADSSTPPKTVPCLCRYAMTAERVARLRMNNTKNIIVCSSFPLPKYRIEGVQKVKCDRVLIFDQTVPSLVSPRKYIQQPPEQLDNVSLTSTTSTGSAWSFPSETTYETMEVVAEVHTEPPIPPPRRRRAAVAQLRQDLEVTEEIEPYVTQQAEIMVMERVATTDIRAIPVPARRAITMPVPAPRVRKVATEPPLEPEAPIPAPRKRRTTSTSPPHNPEDFVPRVPVELPWEPEDLDIQFGDLEPRRRNTRDRDVSTGIQFGDIDFNQSXLGRAGAYIFSSDTGPGHLQQKSVRQHELPCETLYAHEDERIYPPAFDGEKEKVLQAKMQMAPTEANKSRYQSRKVENMKALIVERLREGAKLYLHEQTDKVPTYTSKYPRPVYSPSVDDSLSDPEVAVAACNSFLEENYPTVANYQITDEYDAYLDLVDGSESCLDRATFCPAKLRCYPKHHAYHQPQIRSAVPSPFQNTLQNVLAAATKRNCNVTQMRELPTMDSAVFNVESFKKYACTGEYWQEFKDNPIRITTENITTYVAKLKGPKAAALFAKTHNLVPLQEVPMDRFVMDMKRDVKVTPGTKHTEERPKVQVIQAAEPLATAYLCGIHRELVRRLKAVLTPNIHTLFDMSAEDFDAIIAAHFQPGDAVLETDIASFDKSQDDSLALTALMLLEDLGVDQELLDLIEAAFGEITSVHLPTGTRFKFGAMMKSGMFLTLFINTLLNIVIACRVLRDKLSSSACAAFIGDDNIVHGVRSDPLMAERCASWVNMEVKIIDATMCEKPPYFCGGFILYDSVAGTACRVADPLKRLFKLGKPLPADDNQDEDRRRALKDETVKWSRIGLREELDVALSSRYQVSGVGNITRAMSTLSKSLKSFRKIRGPIIHLYGGPK.

One can recognise an Alphavirus-like MT domain in the interval 27 to 258 (ESQQVTPNDH…ESRKLLRSWH (232 aa)). A nsP1 membrane-binding region spans residues 243–262 (GSTLYTESRKLLRSWHLPSV). Residues Cys-416 and Cys-418 are each lipidated (S-palmitoyl cysteine; by host). The 153-residue stretch at 689-841 (DLINPPFHEF…HNICTRVLHK (153 aa)) folds into the (+)RNA virus helicase ATP-binding domain. 720-727 (GVPGSGKS) contributes to the a ribonucleoside 5'-triphosphate binding site. Residues 842-990 (SISRRCTLPV…LEEWHEEHDG (149 aa)) form the (+)RNA virus helicase C-terminal domain. A Peptidase C9 domain is found at 1003–1325 (DPFQNKAKVC…QKLSSMYACN (323 aa)). Positions 1004-1023 (PFQNKAKVCWAKCLVQVLET) are nucleolus localization signal. The active-site For cysteine protease nsP2 activity is Cys-1012. The Nuclear export signal signature appears at 1056 to 1065 (TRYYGVDLDS). His-1081 (for cysteine protease nsP2 activity) is an active-site residue. Positions 1180–1184 (PHKRV) match the Nuclear localization signal motif. The Macro domain maps to 1333 to 1492 (APSYRVRRAD…KIQEAIDRRT (160 aa)). ADP-D-ribose-binding residues include Asp-1342, Asn-1356, Gly-1364, Gly-1444, and Phe-1446. Positions 1594, 1596, 1619, and 1637 each coordinate Zn(2+). Positions 1768–1803 (KVATEPPLEPEAPIPAPRKRRTTSTSPPHNPEDFVP) are disordered. Residues 1774-1783 (PLEPEAPIPA) show a composition bias toward pro residues. Short sequence motifs (FGDF; binding to host G3BP1) lie at residues 1820–1823 (FGDL) and 1841–1844 (FGDI). The region spanning 2221–2336 (DAVLETDIAS…HGVRSDPLMA (116 aa)) is the RdRp catalytic domain.

As to quaternary structure, interacts with non-structural protein 3. Interacts with RNA-directed RNA polymerase nsP4. Interacts with protease nsP2. interacts with itself. In terms of assembly, interacts with mRNA-capping enzyme nsP1. Interacts with host DDX1. Interacts with host DDX3. Interacts (via C-terminus) with host G3BP1; this interaction inhibits the formation of host stress granules on viral mRNAs and the nsp3-G3BP1 complexes bind viral RNAs and probably orchestrate the assembly of viral replication complexes. Interacts (via C-terminus) with host G3BP2; this interaction inhibits the formation of host stress granules on viral mRNAs and the nsp3-G3BP2 complexes bind viral RNAs and probably orchestrate the assembly of viral replication complexes. Interacts with mRNA-capping enzyme nsP1. Interacts with protease nsP2. interacts with itself. As to quaternary structure, interacts with RNA-directed RNA polymerase nsP4. Interacts with mRNA-capping enzyme nsP1. Interacts with KPNA1/karyopherin-alpha1; this interaction probably allows the active transport of protease nsP2 into the host nucleus. It depends on Mg(2+) as a cofactor. The cofactor is Mn(2+). Post-translationally, specific enzymatic cleavages in vivo yield mature proteins. The processing of the polyprotein is temporally regulated. In early stages (1.7 hpi), P1234 is first cleaved in trans through its nsP2 protease activity, releasing P123' and nsP4, which associate to form the early replication complex. At the same time, P1234 is also cut at the nsP1/nsP2 site early in infection but with lower efficiency. After replication of the viral minus-strand RNAs (4 hpi), the polyproteins are cut at the nsP1/nsP2 and nsP2/nsP3 sites very efficiently, preventing accumulation of P123' and P1234 and allowing the formation of the late replication complex. NsP3'/nsP4 site is not cleaved anymore and P34 is produced rather than nsP4. In terms of processing, specific enzymatic cleavages in vivo yield mature proteins. The processing of the polyprotein is temporally regulated. In early stages (1.7 hpi), P123 is cleaved at the nsP1/nsP2 site with low efficiency. After replication of the viral minus-strand RNAs (4 hpi), the polyproteins are cut at the nsP1/nsP2 and nsP2/nsP3 sites very efficiently, preventing accumulation of P123 and allowing the formation of the late replication complex. Palmitoylated by host palmitoyltransferases ZDHHC2 and ZDHHC19. Post-translationally, phosphorylated by host on serines and threonines. In terms of processing, ubiquitinated; targets the protein for rapid degradation via the ubiquitin system. Nsp4 is present in extremely low quantities due to low frequency of translation through the amber stop-codon and the degradation by the ubiquitin pathway.

The protein resides in the host cytoplasmic vesicle membrane. It localises to the host cell membrane. It is found in the host cell projection. The protein localises to the host filopodium. Its subcellular location is the host nucleus. The protein resides in the host cytoplasm. The enzyme catalyses GTP + S-adenosyl-L-methionine = N(7)-methyl-GTP + S-adenosyl-L-homocysteine. It catalyses the reaction N(7)-methyl-GTP + L-histidyl-[protein] = N(tele)-(N(7)-methylguanosine 5'-phospho)-L-histidyl-[protein] + diphosphate. It carries out the reaction N(tele)-(N(7)-methylguanosine 5'-phospho)-L-histidyl-[protein] + a 5'-end diphospho-(purine-ribonucleoside) in mRNA + H(+) = a 5'-end (N(7)-methyl 5'-triphosphoguanosine)-(purine-ribonucleoside) in mRNA + L-histidyl-[protein]. The catalysed reaction is a 5'-end triphospho-ribonucleoside in mRNA + H2O = a 5'-end diphospho-ribonucleoside in mRNA + phosphate + H(+). The enzyme catalyses a ribonucleoside 5'-triphosphate + H2O = a ribonucleoside 5'-diphosphate + phosphate + H(+). It catalyses the reaction ATP + H2O = ADP + phosphate + H(+). It carries out the reaction RNA(n) + a ribonucleoside 5'-triphosphate = RNA(n+1) + diphosphate. The catalysed reaction is RNA(n) + ATP = RNA(n)-3'-adenine ribonucleotide + diphosphate. The enzyme catalyses 4-O-(ADP-D-ribosyl)-L-aspartyl-[protein] + H2O = L-aspartyl-[protein] + ADP-D-ribose + H(+). It catalyses the reaction 5-O-(ADP-D-ribosyl)-L-glutamyl-[protein] + H2O = L-glutamyl-[protein] + ADP-D-ribose + H(+). It carries out the reaction ADP-alpha-D-ribose 1''-phosphate + H2O = ADP-D-ribose + phosphate. Inactive precursor of the viral replicase, which is activated by cleavages carried out by the viral protease nsP2. In terms of biological role, the early replication complex formed by the polyprotein P123 and nsP4 synthesizes minus-strand RNAs. As soon P123 is cleaved into mature proteins, the plus-strand RNAs synthesis begins. Its function is as follows. The early replication complex formed by the polyprotein P123' and nsP4 synthesizes minus-strand RNAs. Polyprotein P123' is a short-lived polyprotein that accumulates during early stage of infection. As soon P123' is cleaved into mature proteins, the plus-strand RNAs synthesis begins. Functionally, cytoplasmic capping enzyme that catalyzes two virus-specific reactions: methyltransferase and nsP1 guanylyltransferase. mRNA-capping is necessary since all viral RNAs are synthesized in the cytoplasm, and host capping enzymes are restricted to the nucleus. The enzymatic reaction involves a covalent link between 7-methyl-GMP and nsP1, whereas eukaryotic capping enzymes form a covalent complex only with GMP. nsP1 capping consists in the following reactions: GTP is first methylated into 7-methyl-GMP and then is covalently linked to nsP1 to form the m7GMp-nsP1 complex from which 7-methyl-GMP complex is transferred to the mRNA to create the cap structure. NsP1 is needed for the initiation of the minus-strand RNAs synthesis. Probably serves as a membrane anchor for the replication complex composed of nsP1-nsP4. Palmitoylated nsP1 is remodeling host cell cytoskeleton, and induces filopodium-like structure formation at the surface of the host cell. Multifunctional protein whose N-terminus is part of the RNA polymerase complex and displays NTPase, RNA triphosphatase and helicase activities. NTPase and RNA triphosphatase are involved in viral RNA capping and helicase keeps a check on the dsRNA replication intermediates. The C-terminus harbors a protease that specifically cleaves the polyproteins and releases the mature proteins. Required for the shutoff of minus-strand RNAs synthesis. Specifically inhibits the host IFN response by promoting the nuclear export of host STAT1. Also inhibits host transcription by inducing rapid proteasome-dependent degradation of POLR2A, a catalytic subunit of the RNAPII complex. The resulting inhibition of cellular protein synthesis serves to ensure maximal viral gene expression and to evade host immune response. In terms of biological role, seems to be essential for minus-strand RNAs and subgenomic 26S mRNAs synthesis. Displays mono-ADP-ribosylhydrolase activity. ADP-ribosylation is a post-translational modification that controls various processes of the host cell and the virus probably needs to revert it for optimal viral replication. Binds proteins of FXR family and sequesters them into the viral RNA replication complexes thereby inhibiting the formation of host stress granules on viral mRNAs. The nsp3'-FXR complexes bind viral RNAs and probably orchestrate the assembly of viral replication complexes, thanks to the ability of FXR family members to self-assemble and bind DNA. Its function is as follows. Seems to be essential for minus-strand RNAs and subgenomic 26S mRNAs synthesis. Displays mono-ADP-ribosylhydrolase activity. ADP-ribosylation is a post-translantional modification that controls various processes of the host cell and the virus probably needs to revert it for optimal viral replication. Binds proteins of G3BP family and sequesters them into the viral RNA replication complexes thereby inhibiting the formation of host stress granules on viral mRNAs. The nsp3-G3BP complexes bind viral RNAs and probably orchestrate the assembly of viral replication complexes, thanks to the ability of G3BP family members to self-assemble and bind DNA. Functionally, RNA dependent RNA polymerase. Replicates genomic and antigenomic RNA by recognizing replications specific signals. The early replication complex formed by the polyprotein P123 and nsP4 synthesizes minus-strand RNAs. The late replication complex composed of fully processed nsP1-nsP4 is responsible for the production of genomic and subgenomic plus-strand RNAs. The core catalytic domain of nsP4 also possesses terminal adenylyltransferase (TATase) activity that is probably involved in maintenance and repair of the poly(A) tail, an element required for replication of the viral genome. This Getah virus (GETV) protein is Polyprotein P1234.